We begin with the raw amino-acid sequence, 162 residues long: Ecotin (162 aa).

Positions 1 to 18 (MFVPAVVFAALASTSAWA) are cleaved as a signal peptide. C70 and C107 are disulfide-bonded.

It belongs to the protease inhibitor I11 (ecotin) family. In terms of assembly, homodimer.

Its subcellular location is the periplasm. General inhibitor of pancreatic serine proteases: inhibits chymotrypsin, trypsin, elastases, factor X, kallikrein as well as a variety of other proteases. This chain is Ecotin, found in Salmonella choleraesuis (strain SC-B67).